Reading from the N-terminus, the 36-residue chain is Potassium channel toxin alpha-KTx 11.3 (36 aa).

Intrachain disulfides connect cysteine 8-cysteine 27, cysteine 13-cysteine 33, and cysteine 17-cysteine 35.

The protein belongs to the short scorpion toxin superfamily. Potassium channel inhibitor family. Alpha-KTx 11 subfamily. As to expression, expressed by the venom gland.

Its subcellular location is the secreted. Binds and inhibits voltage-sensitive potassium channels. Inhibits the vertebrate potassium channel Kv1.1/KCNA1 with low affinity. The chain is Potassium channel toxin alpha-KTx 11.3 from Parabuthus granulatus (Granulated thick-tailed scorpion).